A 344-amino-acid polypeptide reads, in one-letter code: MLVLGIESSCDETGLALYDTEAGLLSHALHSQIAMHRDYGGVVPELASRDHIRRVLPLLQQVLDEAGRSRADIDAIAFTQGPGLAGALLVGASVANALGFALNVPMVGVHHLEGHLLSPLLTREPPPFPFIALLVSGGHTQLMEVKGIGDYTLLGETLDDAAGEAFDKTAKLLGLGYPGGPEVSRLAEFGTPGAFDLPRPMLHSGNLDFSFAGLKTAVLTQTRKLANTCEQDRANLARAFVDAIVDVLAAKSFAALKQTGHKRLVVAGGVGANRQLRERLNQLGKQRKIDVYYPDLAFCTDNGAMIALAGAMRLQAAPDLAQHSYGYGVTPRWDLADIRLPSAA.

Residues histidine 111 and histidine 115 each contribute to the Fe cation site. Substrate is bound by residues 134–138 (LVSGG), aspartate 167, glycine 180, and asparagine 273. Aspartate 301 serves as a coordination point for Fe cation.

This sequence belongs to the KAE1 / TsaD family. The cofactor is Fe(2+).

Its subcellular location is the cytoplasm. It catalyses the reaction L-threonylcarbamoyladenylate + adenosine(37) in tRNA = N(6)-L-threonylcarbamoyladenosine(37) in tRNA + AMP + H(+). Required for the formation of a threonylcarbamoyl group on adenosine at position 37 (t(6)A37) in tRNAs that read codons beginning with adenine. Is involved in the transfer of the threonylcarbamoyl moiety of threonylcarbamoyl-AMP (TC-AMP) to the N6 group of A37, together with TsaE and TsaB. TsaD likely plays a direct catalytic role in this reaction. This chain is tRNA N6-adenosine threonylcarbamoyltransferase, found in Cupriavidus pinatubonensis (strain JMP 134 / LMG 1197) (Cupriavidus necator (strain JMP 134)).